The primary structure comprises 390 residues: Chalcone synthase (390 aa).

C164 is a catalytic residue.

This sequence belongs to the thiolase-like superfamily. Chalcone/stilbene synthases family.

The enzyme catalyses (E)-4-coumaroyl-CoA + 3 malonyl-CoA + 3 H(+) = 2',4,4',6'-tetrahydroxychalcone + 3 CO2 + 4 CoA. It participates in secondary metabolite biosynthesis; flavonoid biosynthesis. Its function is as follows. The primary product of this enzyme is 4,2',4',6'-tetrahydroxychalcone (also termed naringenin-chalcone or chalcone) which undergoes enzyme-catalyzed or spontaneous isomerization into naringenin. The sequence is that of Chalcone synthase from Hypericum androsaemum (Tutsan).